The following is a 432-amino-acid chain: Short/branched chain specific acyl-CoA dehydrogenase, mitochondrial (432 aa).

The N-terminal 33 residues, 1–33 (MEGLAVRLLRGSRLLRRNFPTCLSSWKIPPHVS), are a transit peptide targeting the mitochondrion. K70 carries the N6-acetyllysine; alternate modification. Position 70 is an N6-succinyllysine; alternate (K70). Residues 174-183 (FCLSEAGAGS) and 207-209 (WIS) contribute to the FAD site. Residue S183 coordinates substrate. S183 is subject to Phosphoserine. Residues Y229 and Y283 each contribute to the substrate site. Position 284 is an N6-acetyllysine; alternate (K284). Residue K284 is modified to N6-succinyllysine; alternate. 291 to 294 (NEGR) lines the substrate pocket. Residues R319, Q330, and 387-391 (EWMGG) contribute to the FAD site. E414 functions as the Proton acceptor in the catalytic mechanism. 416 to 418 (ASN) contacts FAD. The residue at position 426 (K426) is an N6-acetyllysine.

It belongs to the acyl-CoA dehydrogenase family. As to quaternary structure, homotetramer. Requires FAD as cofactor.

Its subcellular location is the mitochondrion matrix. It carries out the reaction 2-methylbutanoyl-CoA + oxidized [electron-transfer flavoprotein] + H(+) = (2E)-2-methylbut-2-enoyl-CoA + reduced [electron-transfer flavoprotein]. The catalysed reaction is (2S)-2-methylbutanoyl-CoA + oxidized [electron-transfer flavoprotein] + H(+) = (2E)-2-methylbut-2-enoyl-CoA + reduced [electron-transfer flavoprotein]. It catalyses the reaction (2R)-2-methylbutanoyl-CoA + oxidized [electron-transfer flavoprotein] + H(+) = ethylacryloyl-CoA + reduced [electron-transfer flavoprotein]. The enzyme catalyses butanoyl-CoA + oxidized [electron-transfer flavoprotein] + H(+) = (2E)-butenoyl-CoA + reduced [electron-transfer flavoprotein]. It carries out the reaction 2-methylpropanoyl-CoA + oxidized [electron-transfer flavoprotein] + H(+) = 2-methylpropenoyl-CoA + reduced [electron-transfer flavoprotein]. The catalysed reaction is hexanoyl-CoA + oxidized [electron-transfer flavoprotein] + H(+) = (2E)-hexenoyl-CoA + reduced [electron-transfer flavoprotein]. It catalyses the reaction valproyl-CoA + oxidized [electron-transfer flavoprotein] + H(+) = (2E)-2-propylpent-2-enoyl-CoA + reduced [electron-transfer flavoprotein]. The protein operates within lipid metabolism; mitochondrial fatty acid beta-oxidation. Its pathway is amino-acid degradation; L-isoleucine degradation. In terms of biological role, short and branched chain specific acyl-CoA dehydrogenase that catalyzes the removal of one hydrogen from C-2 and C-3 of the fatty acyl-CoA thioester, resulting in the formation of trans-2-enoyl-CoA. Among the different mitochondrial acyl-CoA dehydrogenases, acts specifically on short and branched chain acyl-CoA derivatives such as (S)-2-methylbutyryl-CoA as well as short straight chain acyl-CoAs such as butyryl-CoA. Plays an important role in the metabolism of L-isoleucine by catalyzing the dehydrogenation of 2-methylbutyryl-CoA, one of the steps of the L-isoleucine catabolic pathway. Can also act on valproyl-CoA, a metabolite of the valproic acid drug. The chain is Short/branched chain specific acyl-CoA dehydrogenase, mitochondrial (ACADSB) from Pongo abelii (Sumatran orangutan).